We begin with the raw amino-acid sequence, 271 residues long: ATP synthase subunit a (271 aa).

Helical transmembrane passes span 38-58, 100-120, 146-166, 220-240, and 242-262; these read FWTLNIDSMFFSVVLGLLFLV, LIAPLALTIFVWVFLMNLMDL, DVNITLSMALGVFILILFYSI, LIFILIAGLLPWWSQWILNVP, and AIFHILIITLQAFIFMVLTIV.

The protein belongs to the ATPase A chain family. F-type ATPases have 2 components, CF(1) - the catalytic core - and CF(0) - the membrane proton channel. CF(1) has five subunits: alpha(3), beta(3), gamma(1), delta(1), epsilon(1). CF(0) has three main subunits: a(1), b(2) and c(9-12). The alpha and beta chains form an alternating ring which encloses part of the gamma chain. CF(1) is attached to CF(0) by a central stalk formed by the gamma and epsilon chains, while a peripheral stalk is formed by the delta and b chains.

The protein localises to the cell inner membrane. Its function is as follows. Key component of the proton channel; it plays a direct role in the translocation of protons across the membrane. This chain is ATP synthase subunit a, found in Salmonella arizonae (strain ATCC BAA-731 / CDC346-86 / RSK2980).